The sequence spans 215 residues: Adenylate kinase (215 aa).

Gly10–Thr15 provides a ligand contact to ATP. Positions Ser30–Val59 are NMP. AMP contacts are provided by residues Thr31, Arg36, Lys57–Val59, Gly85–Arg88, and Gln92. An LID region spans residues Gly126–Asp163. Position 127 (Arg127) interacts with ATP. Positions 130 and 133 each coordinate Zn(2+). Ser136 to Tyr137 lines the ATP pocket. Zn(2+)-binding residues include Cys150 and Cys153. Residues Arg160 and Arg171 each contribute to the AMP site. ATP is bound at residue Leu199.

The protein belongs to the adenylate kinase family. As to quaternary structure, monomer.

It is found in the cytoplasm. The catalysed reaction is AMP + ATP = 2 ADP. It functions in the pathway purine metabolism; AMP biosynthesis via salvage pathway; AMP from ADP: step 1/1. Functionally, catalyzes the reversible transfer of the terminal phosphate group between ATP and AMP. Plays an important role in cellular energy homeostasis and in adenine nucleotide metabolism. The chain is Adenylate kinase from Finegoldia magna (strain ATCC 29328 / DSM 20472 / WAL 2508) (Peptostreptococcus magnus).